Reading from the N-terminus, the 141-residue chain is Small ribosomal subunit protein uS19 (141 aa).

The protein belongs to the universal ribosomal protein uS19 family.

Functionally, protein S19 forms a complex with S13 that binds strongly to the 16S ribosomal RNA. The chain is Small ribosomal subunit protein uS19 from Thermofilum pendens (strain DSM 2475 / Hrk 5).